Here is a 428-residue protein sequence, read N- to C-terminus: Citrate synthase (428 aa).

Residues histidine 265, histidine 306, and aspartate 363 contribute to the active site.

It belongs to the citrate synthase family. As to quaternary structure, homohexamer.

It carries out the reaction oxaloacetate + acetyl-CoA + H2O = citrate + CoA + H(+). It functions in the pathway carbohydrate metabolism; tricarboxylic acid cycle; isocitrate from oxaloacetate: step 1/2. With respect to regulation, allosterically inhibited by NADH. This Pseudomonas aeruginosa (strain ATCC 15692 / DSM 22644 / CIP 104116 / JCM 14847 / LMG 12228 / 1C / PRS 101 / PAO1) protein is Citrate synthase (gltA).